The following is a 355-amino-acid chain: UDP-N-acetylglucosamine--N-acetylmuramyl-(pentapeptide) pyrophosphoryl-undecaprenol N-acetylglucosamine transferase (355 aa).

Residues 11–13 (TAG), arginine 164, serine 194, and glutamine 289 contribute to the UDP-N-acetyl-alpha-D-glucosamine site.

It belongs to the glycosyltransferase 28 family. MurG subfamily.

It is found in the cell membrane. The enzyme catalyses di-trans,octa-cis-undecaprenyl diphospho-N-acetyl-alpha-D-muramoyl-L-alanyl-D-glutamyl-meso-2,6-diaminopimeloyl-D-alanyl-D-alanine + UDP-N-acetyl-alpha-D-glucosamine = di-trans,octa-cis-undecaprenyl diphospho-[N-acetyl-alpha-D-glucosaminyl-(1-&gt;4)]-N-acetyl-alpha-D-muramoyl-L-alanyl-D-glutamyl-meso-2,6-diaminopimeloyl-D-alanyl-D-alanine + UDP + H(+). Its pathway is cell wall biogenesis; peptidoglycan biosynthesis. In terms of biological role, cell wall formation. Catalyzes the transfer of a GlcNAc subunit on undecaprenyl-pyrophosphoryl-MurNAc-pentapeptide (lipid intermediate I) to form undecaprenyl-pyrophosphoryl-MurNAc-(pentapeptide)GlcNAc (lipid intermediate II). This Lachnoclostridium phytofermentans (strain ATCC 700394 / DSM 18823 / ISDg) (Clostridium phytofermentans) protein is UDP-N-acetylglucosamine--N-acetylmuramyl-(pentapeptide) pyrophosphoryl-undecaprenol N-acetylglucosamine transferase.